A 61-amino-acid polypeptide reads, in one-letter code: Cytotoxin homolog 2 (61 aa).

Disulfide bonds link Cys3–Cys22, Cys15–Cys39, Cys43–Cys54, and Cys55–Cys60.

This sequence belongs to the three-finger toxin family. Short-chain subfamily. Orphan group XV sub-subfamily. In terms of tissue distribution, expressed by the venom gland.

It localises to the secreted. The protein resides in the target cell membrane. Functionally, has low cytotoxic activity. The sequence is that of Cytotoxin homolog 2 from Naja melanoleuca (Forest cobra).